The chain runs to 135 residues: Large ribosomal subunit protein bL21 (135 aa).

Residues 85 to 135 (YRVKRGHRQQYTQIEIESLNANGPASSDDEEAAETSDAEPDEDPEAEPAEA) are disordered. Positions 93 to 107 (QQYTQIEIESLNANG) are enriched in polar residues. Acidic residues predominate over residues 111–135 (SDDEEAAETSDAEPDEDPEAEPAEA).

This sequence belongs to the bacterial ribosomal protein bL21 family. In terms of assembly, part of the 50S ribosomal subunit. Contacts protein L20.

In terms of biological role, this protein binds to 23S rRNA in the presence of protein L20. The protein is Large ribosomal subunit protein bL21 of Salinibacter ruber (strain DSM 13855 / M31).